The chain runs to 245 residues: 2,3-bisphosphoglycerate-dependent phosphoglycerate mutase (245 aa).

Substrate-binding positions include 8 to 15 (RHGQSLWN), 21 to 22 (TG), Arg60, 87 to 90 (ERHY), Lys98, 114 to 115 (RR), and 183 to 184 (GN). Residue His9 is the Tele-phosphohistidine intermediate of the active site. The active-site Proton donor/acceptor is the Glu87.

This sequence belongs to the phosphoglycerate mutase family. BPG-dependent PGAM subfamily.

It catalyses the reaction (2R)-2-phosphoglycerate = (2R)-3-phosphoglycerate. It participates in carbohydrate degradation; glycolysis; pyruvate from D-glyceraldehyde 3-phosphate: step 3/5. In terms of biological role, catalyzes the interconversion of 2-phosphoglycerate and 3-phosphoglycerate. The chain is 2,3-bisphosphoglycerate-dependent phosphoglycerate mutase from Bacillus cytotoxicus (strain DSM 22905 / CIP 110041 / 391-98 / NVH 391-98).